We begin with the raw amino-acid sequence, 208 residues long: Glutathione S-transferase 1-1 (208 aa).

A GST N-terminal domain is found at 1–80 (MDFYYLPGSA…YLVEKYGKND (80 aa)). Glutathione contacts are provided by residues Ser9, 50 to 52 (HTI), and 64 to 66 (ESR). Positions 86-207 (CPKKRAVINQ…EGCLEFKKFF (122 aa)) constitute a GST C-terminal domain.

The protein belongs to the GST superfamily. Theta family. Homodimer.

It carries out the reaction RX + glutathione = an S-substituted glutathione + a halide anion + H(+). Its function is as follows. Conjugation of reduced glutathione to a wide number of exogenous and endogenous hydrophobic electrophiles. The polypeptide is Glutathione S-transferase 1-1 (GST1) (Lucilia cuprina (Green bottle fly)).